The sequence spans 246 residues: Acetoacetate decarboxylase (246 aa).

K115 serves as the catalytic Schiff-base intermediate with acetoacetate.

The protein belongs to the ADC family.

The catalysed reaction is acetoacetate + H(+) = acetone + CO2. Its function is as follows. Catalyzes the conversion of acetoacetate to acetone and carbon dioxide. This is Acetoacetate decarboxylase from Clostridium beijerinckii (strain ATCC 51743 / NCIMB 8052) (Clostridium acetobutylicum).